The chain runs to 59 residues: Large ribosomal subunit protein bL32 (59 aa).

The segment at 1–59 is disordered; sequence MAVQQNKKSPSKRGMHRSHDHLSVAPLAVEPTTGETHLRHHVSPNGYYRGRKVIKTKND. Composition is skewed to basic residues over residues 9–19 and 49–59; these read SPSKRGMHRSH and RGRKVIKTKND.

The protein belongs to the bacterial ribosomal protein bL32 family.

In Cupriavidus metallidurans (strain ATCC 43123 / DSM 2839 / NBRC 102507 / CH34) (Ralstonia metallidurans), this protein is Large ribosomal subunit protein bL32.